Consider the following 198-residue polypeptide: Recombination protein RecR (198 aa).

The segment at 57–72 (CEKCNTFTEAQICEVC) adopts a C4-type zinc-finger fold. Positions 80 to 175 (TLLCVVETPA…AVTRLARGVP (96 aa)) constitute a Toprim domain.

Belongs to the RecR family.

In terms of biological role, may play a role in DNA repair. It seems to be involved in an RecBC-independent recombinational process of DNA repair. It may act with RecF and RecO. The polypeptide is Recombination protein RecR (Paraburkholderia phytofirmans (strain DSM 17436 / LMG 22146 / PsJN) (Burkholderia phytofirmans)).